The chain runs to 654 residues: Tetratricopeptide repeat protein 30 homolog (654 aa).

TPR repeat units lie at residues 10–43 (DGEYTKTIYTMIKEERFQDAINTLNTIPESSTTR), 44–76 (AGLSLLGHCYYQTQDFIEAANCYEHLLNLVPDV), 145–178 (ASTKNDEGCLLYQANMYEDALQRYVSALQAGGFN), 180–212 (HVAYNAALCHYRRKENSQALNYIAEIVERGIRN), 393–426 (CRSATDQNALRMALREYEGALESYLPVAMARAWI), 452–485 (SWRLHAAHVLFMRGDRYKEAAAFYEPIVRQNYDD), and 535–568 (CIVNLVIGTLYCAKNNYEFGLSRIAHALDGGSGA).

This sequence belongs to the TTC30/dfy-1/fleer family.

It is found in the cell projection. The protein localises to the cilium. In terms of biological role, required for polyglutamylation of axonemal tubulin in sensory cilia. Plays a role in anterograde intraflagellar transport (IFT), the process by which cilia precursors are transported from the base of the cilium to the site of their incorporation at the tip. The sequence is that of Tetratricopeptide repeat protein 30 homolog from Anopheles gambiae (African malaria mosquito).